Consider the following 147-residue polypeptide: MKVILKENLDNLGHIGDIVKVAPGYARNYLLPKGLALEATTKNAKALDHAKKHLEYKKNKVLEQARQFAARIEGIALTLSHQAGEEGKLFGAVTNMELAENLKAQGVEIDRKKIVLAEPIKQVGDFTAIIKIHPEVNATLKVTVTKA.

The protein belongs to the bacterial ribosomal protein bL9 family.

Functionally, binds to the 23S rRNA. The protein is Large ribosomal subunit protein bL9 of Geotalea daltonii (strain DSM 22248 / JCM 15807 / FRC-32) (Geobacter daltonii).